A 200-amino-acid chain; its full sequence is Recombination protein RecR (200 aa).

A C4-type zinc finger spans residues 58-73 (CEVCHNLAEEGLCAIC). Residues 81–176 (GLICVVEEPV…DISRLAYGMP (96 aa)) enclose the Toprim domain.

The protein belongs to the RecR family.

In terms of biological role, may play a role in DNA repair. It seems to be involved in an RecBC-independent recombinational process of DNA repair. It may act with RecF and RecO. The sequence is that of Recombination protein RecR from Magnetococcus marinus (strain ATCC BAA-1437 / JCM 17883 / MC-1).